The following is a 53-amino-acid chain: UPF0391 membrane protein BPSS2216 (53 aa).

Transmembrane regions (helical) follow at residues 5-25 (ALVF…GIAA) and 30-50 (IAKI…VLGV).

The protein belongs to the UPF0391 family.

The protein localises to the cell membrane. The chain is UPF0391 membrane protein BPSS2216 from Burkholderia pseudomallei (strain K96243).